A 111-amino-acid chain; its full sequence is Large ribosomal subunit protein uL24 (111 aa).

This sequence belongs to the universal ribosomal protein uL24 family. In terms of assembly, part of the 50S ribosomal subunit.

One of two assembly initiator proteins, it binds directly to the 5'-end of the 23S rRNA, where it nucleates assembly of the 50S subunit. Its function is as follows. One of the proteins that surrounds the polypeptide exit tunnel on the outside of the subunit. In Chlamydia muridarum (strain MoPn / Nigg), this protein is Large ribosomal subunit protein uL24.